The chain runs to 764 residues: 5-methyltetrahydropteroyltriglutamate--homocysteine methyltransferase (764 aa).

Residues 17–20 (RELK) and lysine 117 contribute to the 5-methyltetrahydropteroyltri-L-glutamate site. L-homocysteine-binding positions include 437 to 439 (IGS) and glutamate 490. L-methionine-binding positions include 437-439 (IGS) and glutamate 490. 5-methyltetrahydropteroyltri-L-glutamate contacts are provided by residues 521–522 (RC) and tryptophan 567. Aspartate 605 is an L-homocysteine binding site. Aspartate 605 contacts L-methionine. A 5-methyltetrahydropteroyltri-L-glutamate-binding site is contributed by glutamate 611. Zn(2+) contacts are provided by histidine 647, cysteine 649, and glutamate 671. The Proton donor role is filled by histidine 701. Residue cysteine 733 coordinates Zn(2+).

Belongs to the vitamin-B12 independent methionine synthase family. Zn(2+) serves as cofactor.

It catalyses the reaction 5-methyltetrahydropteroyltri-L-glutamate + L-homocysteine = tetrahydropteroyltri-L-glutamate + L-methionine. Its pathway is amino-acid biosynthesis; L-methionine biosynthesis via de novo pathway; L-methionine from L-homocysteine (MetE route): step 1/1. Catalyzes the transfer of a methyl group from 5-methyltetrahydrofolate to homocysteine resulting in methionine formation. This is 5-methyltetrahydropteroyltriglutamate--homocysteine methyltransferase from Blochmanniella pennsylvanica (strain BPEN).